The following is a 1906-amino-acid chain: Retinoic acid-induced protein 1 (1906 aa).

6 disordered regions span residues 1–261 (MQSF…APGQ), 273–299 (RLSY…RHHA), 335–370 (YQTF…LENF), 469–520 (VSRT…YLSG), 538–571 (SPAR…SDDS), and 656–712 (SAWP…GTKP). The span at 13 to 24 (KQQNYQQTSQET) shows a compositional bias: polar residues. The span at 66 to 75 (PSGTAAAVAA) shows a compositional bias: low complexity. A compositionally biased stretch (pro residues) spans 124–134 (PQPPPPQPQPL). Over residues 213–226 (SQSFPTSSTYSSSV) the composition is skewed to low complexity. Positions 252-261 (TASSSLAPGQ) are enriched in polar residues. Low complexity-rich tracts occupy residues 278–291 (QQQQ…QQQQ) and 339–353 (SPSS…VGRS). Serine 339 and serine 345 each carry phosphoserine. A Phosphothreonine modification is found at threonine 472. The segment covering 541-563 (RVNSNSKAKPESVSTCSVTSPDD) has biased composition (polar residues). Phosphoserine occurs at positions 568 and 683. Threonine 696 carries the post-translational modification Phosphothreonine. Serine 805 is modified (phosphoserine). Lysine 811 is covalently cross-linked (Glycyl lysine isopeptide (Lys-Gly) (interchain with G-Cter in SUMO2)). A Glycyl lysine isopeptide (Lys-Gly) (interchain with G-Cter in SUMO1) cross-link involves residue lysine 819. A phosphoserine mark is found at serine 880 and serine 892. Residue lysine 901 forms a Glycyl lysine isopeptide (Lys-Gly) (interchain with G-Cter in SUMO1); alternate linkage. Lysine 901 participates in a covalent cross-link: Glycyl lysine isopeptide (Lys-Gly) (interchain with G-Cter in SUMO2); alternate. The segment covering 937-947 (KVQSWFESSLS) has biased composition (polar residues). 5 disordered regions span residues 937 to 1299 (KVQS…ETPD), 1344 to 1570 (FACK…PLDP), 1613 to 1637 (VVNS…SSSS), 1746 to 1775 (AAAA…SARG), and 1794 to 1819 (EEAA…GGEA). Over residues 950–962 (KPGEEGPDGERAP) the composition is skewed to basic and acidic residues. Over residues 996–1005 (KSLRSRRVHR) the composition is skewed to basic residues. The residue at position 1064 (serine 1064) is a Phosphoserine. At threonine 1068 the chain carries Phosphothreonine. The segment covering 1101–1119 (PSPKAASSPSNPAALPVAS) has biased composition (low complexity). The residue at position 1122 (serine 1122) is a Phosphoserine. Short sequence motifs (nuclear localization signal) lie at residues 1160–1177 (RRRP…TKKL) and 1223–1240 (KRKS…RNLV). Residues 1242–1252 (RSRSSSSSNAS) are compositionally biased toward low complexity. A phosphoserine mark is found at serine 1352, serine 1358, and serine 1374. Residue lysine 1425 forms a Glycyl lysine isopeptide (Lys-Gly) (interchain with G-Cter in SUMO2) linkage. At serine 1431 the chain carries Phosphoserine. Residues 1444–1453 (PKKRSRKGRA) are compositionally biased toward basic residues. Composition is skewed to polar residues over residues 1482–1491 (SGTQGASEDN) and 1517–1534 (QPQT…YSSY). Over residues 1535–1545 (SKRKRLTRGRA) the composition is skewed to basic residues. Residues 1628–1637 (SSSASSSSSS) are compositionally biased toward low complexity. Residues 1780–1835 (LQSCYCCDGREDGGEEAAPADKGRKHECSKEAPAEPGGEAQEHWVHEACAVWTGGV) form a C2HC pre-PHD-type zinc finger. Basic and acidic residues predominate over residues 1798-1812 (PADKGRKHECSKEAP). The segment at 1855–1903 (MMCSSCQEAGATIGCCHKGCLHTYHYPCASDAGCIFIEENFSLKCPKHK) adopts a PHD-type zinc-finger fold.

In terms of tissue distribution, expressed in all tissues examined with higher expression in the heart and brain. No expression was seen in the corpus callosum of the brain.

It is found in the cytoplasm. Its subcellular location is the nucleus. Its function is as follows. Transcriptional regulator of the circadian clock components: CLOCK, BMAL1, BMAL2, PER1/3, CRY1/2, NR1D1/2 and RORA/C. Positively regulates the transcriptional activity of CLOCK a core component of the circadian clock. Regulates transcription through chromatin remodeling by interacting with other proteins in chromatin as well as proteins in the basic transcriptional machinery. May be important for embryonic and postnatal development. May be involved in neuronal differentiation. The protein is Retinoic acid-induced protein 1 (RAI1) of Homo sapiens (Human).